A 332-amino-acid chain; its full sequence is tRNA uridine(34) hydroxylase (332 aa).

In terms of domain architecture, Rhodanese spans 127–221 (SDPETVLIDT…YLEEVPKEKS (95 aa)). The active-site Cysteine persulfide intermediate is the C181. The interval 308–332 (AKKLAQLNKQKKQQAKEAARKKAQQ) is disordered. The segment covering 321 to 332 (QAKEAARKKAQQ) has biased composition (basic and acidic residues).

The protein belongs to the TrhO family.

The catalysed reaction is uridine(34) in tRNA + AH2 + O2 = 5-hydroxyuridine(34) in tRNA + A + H2O. Its function is as follows. Catalyzes oxygen-dependent 5-hydroxyuridine (ho5U) modification at position 34 in tRNAs. The polypeptide is tRNA uridine(34) hydroxylase (Francisella tularensis subsp. tularensis (strain FSC 198)).